We begin with the raw amino-acid sequence, 591 residues long: Fidgetin-like protein 1 (591 aa).

Disordered regions lie at residues 1–117 (MYSP…KSSL) and 223–249 (GQEPQKSKFQIPLDRQSSSQSNHSQPI). Residues 17 to 26 (KRPETEENRG) show a composition bias toward basic and acidic residues. Over residues 76–93 (DDDPESIVIDEDDEEDEP) the composition is skewed to acidic residues. The segment covering 237–249 (RQSSSQSNHSQPI) has biased composition (polar residues). ATP is bound by residues Ala319 and 359 to 364 (GTGKTM).

The protein belongs to the AAA ATPase family. As to quaternary structure, hexamer. Mg(2+) serves as cofactor.

Its subcellular location is the nucleus. The enzyme catalyses ATP + H2O = ADP + phosphate + H(+). Its function is as follows. Has a role in spindle assembly which acts in the progression through mitosis during embryogenesis. Required for fertility. The polypeptide is Fidgetin-like protein 1 (figl-1) (Caenorhabditis briggsae).